We begin with the raw amino-acid sequence, 284 residues long: D-tagatose-1,6-bisphosphate aldolase subunit GatY (284 aa).

Residue aspartate 82 is the Proton donor of the active site. Residues histidine 83 and histidine 180 each coordinate Zn(2+). Position 181 (glycine 181) interacts with dihydroxyacetone phosphate. Histidine 208 contributes to the Zn(2+) binding site. Residues 209-211 (GAS) and 230-233 (NVAT) each bind dihydroxyacetone phosphate.

It belongs to the class II fructose-bisphosphate aldolase family. TagBP aldolase GatY subfamily. Forms a complex with GatZ. Requires Zn(2+) as cofactor.

It catalyses the reaction D-tagatofuranose 1,6-bisphosphate = D-glyceraldehyde 3-phosphate + dihydroxyacetone phosphate. The protein operates within carbohydrate metabolism; D-tagatose 6-phosphate degradation; D-glyceraldehyde 3-phosphate and glycerone phosphate from D-tagatose 6-phosphate: step 2/2. Functionally, catalytic subunit of the tagatose-1,6-bisphosphate aldolase GatYZ, which catalyzes the reversible aldol condensation of dihydroxyacetone phosphate (DHAP or glycerone-phosphate) with glyceraldehyde 3-phosphate (G3P) to produce tagatose 1,6-bisphosphate (TBP). Requires GatZ subunit for full activity and stability. Is involved in the catabolism of galactitol and D-tagatose. This chain is D-tagatose-1,6-bisphosphate aldolase subunit GatY (gatY), found in Klebsiella oxytoca.